The following is a 191-amino-acid chain: GDP-mannose pyrophosphatase (191 aa).

Residues tyrosine 17, 38–40 (KRE), arginine 67, and 85–87 (AGL) contribute to the GDP-alpha-D-mannose site. The 138-residue stretch at 43–180 (DRGNGATILL…EIRDGKTVLL (138 aa)) folds into the Nudix hydrolase domain. Residues alanine 85, glutamate 100, and glutamate 104 each contribute to the Mg(2+) site. The short motif at 86–106 (GLLDNDEPEVCIRKEAIEETG) is the Nudix box element. Residues glutamate 104, glutamate 127, 150-151 (DE), and lysine 176 each bind GDP-alpha-D-mannose. Glutamate 151 serves as a coordination point for Mg(2+).

Belongs to the Nudix hydrolase family. NudK subfamily. As to quaternary structure, homodimer. Mg(2+) serves as cofactor.

It catalyses the reaction GDP-alpha-D-mannose + H2O = alpha-D-mannose 1-phosphate + GMP + 2 H(+). Its function is as follows. Nucleoside diphosphate sugar hydrolase that hydrolyzes GDP-mannose as its preferred substrate, yielding GMP and mannose-1-phosphate. This is GDP-mannose pyrophosphatase (nudK) from Shigella boydii serotype 4 (strain Sb227).